The chain runs to 785 residues: Semaphorin-3E (785 aa).

The first 25 residues, 1–25 (MLGRMASAQDLLILALCGLLLELPA), serve as a signal peptide directing secretion. The 485-residue stretch at 36–520 (RLRLSHKELW…TESVIAQVKF (485 aa)) folds into the Sema domain. N48 is a glycosylation site (N-linked (GlcNAc...) asparagine). C109 and C119 are joined by a disulfide. Residue N130 is glycosylated (N-linked (GlcNAc...) asparagine). 4 disulfide bridges follow: C137-C146, C274-C386, C298-C346, and C523-C541. N600 is a glycosylation site (N-linked (GlcNAc...) asparagine). In terms of domain architecture, Ig-like C2-type spans 651–740 (LDAGTYFCQT…EYCEKVWCTD (90 aa)). C658 and C733 are joined by a disulfide. Residues 744-785 (KKLKMSPSKWKYANPQEKRQDQEKKARIRPEHYRLPRNIADS) are disordered. Residues 759–777 (QEKRQDQEKKARIRPEHYR) show a composition bias toward basic and acidic residues.

This sequence belongs to the semaphorin family. As to expression, collapsin-1, -2, -3, and -5 bind to overlapping but distinct axon tracts.

The protein resides in the secreted. Functionally, plays an important role in signaling via the cell surface receptor PLXND1. Mediates reorganization of the actin cytoskeleton, leading to the retraction of cell projections. Promotes focal adhesion disassembly and inhibits adhesion of endothelial cells to the extracellular matrix. Regulates angiogenesis. Can down-regulate sprouting angiogenesis. Required for normal vascular patterning during embryogenesis. Induces the collapse and paralysis of neuronal growth cones. Plays an important role in ensuring the specificity of synapse formation. The sequence is that of Semaphorin-3E (SEMA3E) from Gallus gallus (Chicken).